We begin with the raw amino-acid sequence, 65 residues long: Small ribosomal subunit protein eS17 (65 aa).

It belongs to the eukaryotic ribosomal protein eS17 family.

This chain is Small ribosomal subunit protein eS17, found in Archaeoglobus fulgidus (strain ATCC 49558 / DSM 4304 / JCM 9628 / NBRC 100126 / VC-16).